A 32-amino-acid polypeptide reads, in one-letter code: ilv operon leader peptide (32 aa).

The chain is ilv operon leader peptide (ilvL) from Escherichia coli O157:H7.